A 143-amino-acid chain; its full sequence is Glycine cleavage system H protein 1 (143 aa).

One can recognise a Lipoyl-binding domain in the interval 26-107; sequence IYSVGMASIL…PYSSWIAKLK (82 aa). Lysine 67 carries the post-translational modification N6-lipoyllysine.

This sequence belongs to the GcvH family. In terms of assembly, the glycine cleavage system is composed of four proteins: P, T, L and H. Requires (R)-lipoate as cofactor.

In terms of biological role, the glycine cleavage system catalyzes the degradation of glycine. The H protein shuttles the methylamine group of glycine from the P protein to the T protein. This is Glycine cleavage system H protein 1 from Aquifex aeolicus (strain VF5).